Consider the following 181-residue polypeptide: Adenylate kinase (181 aa).

An ATP-binding site is contributed by 10–15; the sequence is GAGKGT. Positions 30–59 are NMP; it reads STGDLFRANISQQTPLGREAQKYMDAGDLV. AMP is bound by residues T31, R36, 57 to 59, 85 to 88, and Q92; these read DLV and GYPR. The tract at residues 126–132 is LID; it reads ARGRNDD. R127 provides a ligand contact to ATP. R129 and R140 together coordinate AMP. Residue G166 coordinates ATP.

This sequence belongs to the adenylate kinase family. Monomer.

The protein localises to the cytoplasm. It carries out the reaction AMP + ATP = 2 ADP. It participates in purine metabolism; AMP biosynthesis via salvage pathway; AMP from ADP: step 1/1. Catalyzes the reversible transfer of the terminal phosphate group between ATP and AMP. Plays an important role in cellular energy homeostasis and in adenine nucleotide metabolism. The polypeptide is Adenylate kinase (Nocardia farcinica (strain IFM 10152)).